The sequence spans 798 residues: Neuroligin-1 (798 aa).

The N-terminal stretch at 1 to 17 (MERIYLLLLLFLPRIRS) is a signal peptide. The Extracellular segment spans residues 18–685 (YDVRSVTTSW…AAGSFTGKAL (668 aa)). An intrachain disulfide couples cysteine 86 to cysteine 125. 3 N-linked (GlcNAc...) asparagine glycosylation sites follow: asparagine 164, asparagine 292, and asparagine 315. A disulfide bond links cysteine 288 and cysteine 307. Residues 636-676 (ANLPFPPPPMPPSPPPELTTKPKPSESPTTLQTTTESEKAA) are disordered. The span at 639 to 652 (PFPPPPMPPSPPPE) shows a compositional bias: pro residues. Low complexity predominate over residues 653–665 (LTTKPKPSESPTT). A helical membrane pass occupies residues 686–706 (GGVIFIGCGFLIMNVCLLIAV). Over 707–798 (RREWGKKRRN…QAPTLEEIQV (92 aa)) the chain is Cytoplasmic. Positions 731 to 765 (HGGGAEQYNSLNSPEPLLSASHKNSTSMRPAGISP) are disordered.

Belongs to the type-B carboxylesterase/lipase family. Interacts (via extracellular domain) with isoform b of madd-4; the interaction is required for the localization to postsynaptic domains. Interacts with unc-49.

It localises to the cell membrane. The protein localises to the synapse. Its function is as follows. Probable neuronal cell surface protein thought to be involved in cell-cell-interactions by forming intercellular junctions through binding to beta-neurexins. Plays a role in the clustering of the GABA(A) receptor unc-49 at postsynaptic sites in neuromuscular junctions (NMJs) via the interaction with madd-4 and neurexin nrx-1 and is thereby required for normal GABAergic synaptic transmission. The polypeptide is Neuroligin-1 (nlg-1) (Caenorhabditis elegans).